The following is a 157-amino-acid chain: MSKHKVSPATIAKNKKALHDYTILEKFEAGIVLQGWEVKSIRAGKVQMVDSHVHIKHGEAWLFNCLITPLLSASTHVVADAAATRKLLLNRREINKIMGRIEQKGFTCVPLAMYWKGPRVKVEIALAQGKKVHDKRQAQKDKDWAREKDRLFKKAYK.

The tract at residues 132–157 is disordered; the sequence is VHDKRQAQKDKDWAREKDRLFKKAYK. Residues 135 to 157 are compositionally biased toward basic and acidic residues; sequence KRQAQKDKDWAREKDRLFKKAYK.

This sequence belongs to the SmpB family.

The protein resides in the cytoplasm. Required for rescue of stalled ribosomes mediated by trans-translation. Binds to transfer-messenger RNA (tmRNA), required for stable association of tmRNA with ribosomes. tmRNA and SmpB together mimic tRNA shape, replacing the anticodon stem-loop with SmpB. tmRNA is encoded by the ssrA gene; the 2 termini fold to resemble tRNA(Ala) and it encodes a 'tag peptide', a short internal open reading frame. During trans-translation Ala-aminoacylated tmRNA acts like a tRNA, entering the A-site of stalled ribosomes, displacing the stalled mRNA. The ribosome then switches to translate the ORF on the tmRNA; the nascent peptide is terminated with the 'tag peptide' encoded by the tmRNA and targeted for degradation. The ribosome is freed to recommence translation, which seems to be the essential function of trans-translation. The polypeptide is SsrA-binding protein (Francisella tularensis subsp. novicida (strain U112)).